Reading from the N-terminus, the 37-residue chain is Tick defensin 2 (37 aa).

Disulfide bonds link Cys-4–Cys-26, Cys-11–Cys-34, and Cys-15–Cys-36.

Belongs to the invertebrate defensin family.

The protein localises to the secreted. Functionally, antibacterial peptide mostly active against Gram-positive bacteria (MIC=0.24 ug/ml on Bacillus subtilis, and MIC=0.94 ug/ml on Micrococcus luteus, MIC&gt;120 ug/ml on both Escherichia coli and Pseudomonas aeruginosa). This is Tick defensin 2 from Ornithodoros savignyi (African eyed tampan).